The following is an 87-amino-acid chain: uncharacterized protein (87 aa).

To bacteriophage lambda exonuclease exo.

This is an uncharacterized protein from Escherichia coli (strain K12).